The chain runs to 1092 residues: Isoleucine--tRNA ligase (1092 aa).

Positions 53–63 match the 'HIGH' region motif; it reads PFANGLPHYGH. A 'KMSKS' region motif is present at residues 613–617; the sequence is KLSKR. Residue Lys-616 coordinates ATP.

It belongs to the class-I aminoacyl-tRNA synthetase family. IleS type 2 subfamily. As to quaternary structure, monomer. Requires Zn(2+) as cofactor.

The protein localises to the cytoplasm. It carries out the reaction tRNA(Ile) + L-isoleucine + ATP = L-isoleucyl-tRNA(Ile) + AMP + diphosphate. In terms of biological role, catalyzes the attachment of isoleucine to tRNA(Ile). As IleRS can inadvertently accommodate and process structurally similar amino acids such as valine, to avoid such errors it has two additional distinct tRNA(Ile)-dependent editing activities. One activity is designated as 'pretransfer' editing and involves the hydrolysis of activated Val-AMP. The other activity is designated 'posttransfer' editing and involves deacylation of mischarged Val-tRNA(Ile). In Rickettsia conorii (strain ATCC VR-613 / Malish 7), this protein is Isoleucine--tRNA ligase.